Here is a 309-residue protein sequence, read N- to C-terminus: Serine/threonine-protein phosphatase PP2A catalytic subunit (309 aa).

Residues Asp-57, His-59, Asp-85, and Asn-117 each coordinate Mn(2+). The active-site Proton donor is His-118. Mn(2+) contacts are provided by His-167 and His-241.

The protein belongs to the PPP phosphatase family. PP-2A subfamily. The cofactor is Mn(2+).

The catalysed reaction is O-phospho-L-seryl-[protein] + H2O = L-seryl-[protein] + phosphate. The enzyme catalyses O-phospho-L-threonyl-[protein] + H2O = L-threonyl-[protein] + phosphate. The polypeptide is Serine/threonine-protein phosphatase PP2A catalytic subunit (Brassica napus (Rape)).